The following is a 105-amino-acid chain: Pyruvate synthase subunit PorD (105 aa).

2 consecutive 4Fe-4S ferredoxin-type domains span residues 44–73 (FRPE…LDEE) and 74–103 (GYPV…MVRE). Residues cysteine 53, cysteine 56, cysteine 59, cysteine 63, cysteine 83, cysteine 86, cysteine 89, and cysteine 93 each coordinate [4Fe-4S] cluster.

As to quaternary structure, heterotetramer of one alpha, one beta, one delta and one gamma chain. Requires [4Fe-4S] cluster as cofactor.

The polypeptide is Pyruvate synthase subunit PorD (porD) (Pyrococcus abyssi (strain GE5 / Orsay)).